The following is a 342-amino-acid chain: Galactose mutarotase (342 aa).

At Ser14 the chain carries Phosphoserine. Residues Asn81–Arg82 and His107 each bind beta-D-galactose. The residue at position 124 (Ser124) is a Phosphoserine. His176 functions as the Proton donor in the catalytic mechanism. Residues His176–Tyr178, Asp243, Gln279, and Glu307 each bind beta-D-galactose. The Proton acceptor role is filled by Glu307.

Belongs to the aldose epimerase family. Monomer.

The protein localises to the cytoplasm. It carries out the reaction alpha-D-galactose = beta-D-galactose. The catalysed reaction is alpha-D-glucose = beta-D-glucose. It functions in the pathway carbohydrate metabolism; hexose metabolism. It participates in carbohydrate metabolism; galactose metabolism. Mutarotase that catalyzes the interconversion of beta-D-galactose and alpha-D-galactose during galactose metabolism. Beta-D-galactose is metabolized in the liver into glucose 1-phosphate, the primary metabolic fuel, by the action of four enzymes that constitute the Leloir pathway: GALM, GALK1 (galactokinase), GALT (galactose-1-phosphate uridylyltransferase) and GALE (UDP-galactose-4'-epimerase). Involved in the maintenance of the equilibrium between the beta- and alpha-anomers of galactose, therefore ensuring a sufficient supply of the alpha-anomer for GALK1. Also active on D-glucose although shows a preference for galactose over glucose. The chain is Galactose mutarotase (GALM) from Sus scrofa (Pig).